The primary structure comprises 218 residues: Histone chaperone ASF1B (218 aa).

Belongs to the ASF1 family. As to quaternary structure, interacts with histone H3 and histone H4. Interacts strongly with the N-terminus of TOUSLED. In terms of processing, phosphorylated in vitro by TOUSLED.

It localises to the nucleus. Functionally, histone chaperone that facilitates histone deposition and histone exchange and removal during nucleosome assembly and disassembly. The sequence is that of Histone chaperone ASF1B (ASF1B) from Arabidopsis thaliana (Mouse-ear cress).